The primary structure comprises 516 residues: MQRSKQETRKSQYKKSIDSDESRRKREEASLSIRKNKREESLLKKRTQAVPGSTPVKVDSLINQRLEQLPSLVAEINSENPDLILKSTTAFRKLLSIEKSPPIEEVIKTGIVPRLVKFLYMQDFPQLQFEAAWALTNIASGTPEQTRVVIENGAIQVFVLLLSSPHDDVREQAVWALGNIAGDSHYCRDLVLSHNALPPLLSLLQNPAAIKVSMVRNATWTLSNFCRGKPQPPFEIVRASLPVLAKLIYYQDEEVLIDACWALSYLSDGSNERIQEVIDAKVCRKMVELLGHPTIAVQTPALRTIGNIVTGDDNQTQIVLSVQALSHLLNLLQSPKRAIRKEACWTISNITAGDKNQIQQVIDANIIPSLVYLLANAEFEIQKEAAWAISNATSCGTPQQIHFLVSQGCVKPLCDLLKVSDPRIINVALEGIENILVAGKKEAQVTGVNPYKKIIEDADGLGKIYDLQHHMNKDTFEKVSRIISTYLEDEQEDEGDLMPEGSSFSFSNQTNSNFNL.

A compositionally biased stretch (basic and acidic residues) spans 1-29 (MQRSKQETRKSQYKKSIDSDESRRKREEA). Positions 1–54 (MQRSKQETRKSQYKKSIDSDESRRKREEASLSIRKNKREESLLKKRTQAVPGST) are disordered. The IBB domain maps to 1–55 (MQRSKQETRKSQYKKSIDSDESRRKREEASLSIRKNKREESLLKKRTQAVPGSTP). ARM repeat units lie at residues 55-96 (PVKV…KLLS), 100-140 (SPPI…NIAS), 143-182 (PEQTRVVIENGAIQVFVLLLSSPHDDVREQAVWALGNIAG), 185-227 (HYCR…NFCR), 229-268 (KPQPPFEIVRASLPVLAKLIYYQDEEVLIDACWALSYLSD), 271-310 (NERIQEVIDAKVCRKMVELLGHPTIAVQTPALRTIGNIVT), 313-352 (DNQTQIVLSVQALSHLLNLLQSPKRAIRKEACWTISNITA), 355-394 (KNQIQQVIDANIIPSLVYLLANAEFEIQKEAAWAISNATS), and 398-437 (PQQIHFLVSQGCVKPLCDLLKVSDPRIINVALEGIENILV). Residues 490-516 (EQEDEGDLMPEGSSFSFSNQTNSNFNL) are disordered. The span at 502–516 (SSFSFSNQTNSNFNL) shows a compositional bias: low complexity.

It belongs to the importin alpha family. As to quaternary structure, forms a complex with tnpo/importin subunit beta.

It is found in the cytoplasm. Its subcellular location is the nucleus envelope. In terms of biological role, functions in nuclear protein import via a substrate-importin alpha-beta transport complex that passes though the nuclear pore complexes (NPC). Binds specifically and directly to substrates containing either a simple or bipartite NLS motif. The protein is Importin subunit alpha-B of Dictyostelium discoideum (Social amoeba).